The sequence spans 163 residues: Probable histone H2A.4 (163 aa).

Disordered stretches follow at residues 1 to 30 (MEVG…VSRS) and 134 to 163 (SAAA…AAAA). Gly residues predominate over residues 12–21 (GAGGRRGGGG). The segment covering 147-163 (KSPKKATTKSPKKAAAA) has biased composition (basic residues). 2 short sequence motifs (SPKK motif) span residues 148–151 (SPKK) and 156–159 (SPKK).

The protein belongs to the histone H2A family. In terms of assembly, the nucleosome is a histone octamer containing two molecules each of H2A, H2B, H3 and H4 assembled in one H3-H4 heterotetramer and two H2A-H2B heterodimers. The octamer wraps approximately 147 bp of DNA.

It is found in the nucleus. The protein localises to the chromosome. Its function is as follows. Core component of nucleosome. Nucleosomes wrap and compact DNA into chromatin, limiting DNA accessibility to the cellular machineries which require DNA as a template. Histones thereby play a central role in transcription regulation, DNA repair, DNA replication and chromosomal stability. DNA accessibility is regulated via a complex set of post-translational modifications of histones, also called histone code, and nucleosome remodeling. The protein is Probable histone H2A.4 of Oryza sativa subsp. indica (Rice).